Reading from the N-terminus, the 130-residue chain is Small ribosomal subunit protein uS9 (130 aa).

This sequence belongs to the universal ribosomal protein uS9 family.

The sequence is that of Small ribosomal subunit protein uS9 from Bacillus thuringiensis subsp. konkukian (strain 97-27).